Here is a 546-residue protein sequence, read N- to C-terminus: CTP synthase (546 aa).

The tract at residues 1–265 is amidoligase domain; sequence MTKYIFVTGG…DDIIAEQLQL (265 aa). Ser13 is a binding site for CTP. UTP is bound at residue Ser13. ATP-binding positions include 14–19 and Asp71; that span reads SLGKGI. Asp71 and Glu139 together coordinate Mg(2+). CTP is bound by residues 146-148, 186-191, and Lys222; these read DIE and KTKPTQ. UTP contacts are provided by residues 186–191 and Lys222; that span reads KTKPTQ. Residues 290 to 542 form the Glutamine amidotransferase type-1 domain; that stretch reads KIAMVGKYVD…VKAALAHQAD (253 aa). An L-glutamine-binding site is contributed by Gly351. Residue Cys378 is the Nucleophile; for glutamine hydrolysis of the active site. Residues 379–382, Glu402, and Arg469 each bind L-glutamine; that span reads LGMQ. Residues His515 and Glu517 contribute to the active site.

Belongs to the CTP synthase family. Homotetramer.

It catalyses the reaction UTP + L-glutamine + ATP + H2O = CTP + L-glutamate + ADP + phosphate + 2 H(+). The enzyme catalyses L-glutamine + H2O = L-glutamate + NH4(+). It carries out the reaction UTP + NH4(+) + ATP = CTP + ADP + phosphate + 2 H(+). Its pathway is pyrimidine metabolism; CTP biosynthesis via de novo pathway; CTP from UDP: step 2/2. Allosterically activated by GTP, when glutamine is the substrate; GTP has no effect on the reaction when ammonia is the substrate. The allosteric effector GTP functions by stabilizing the protein conformation that binds the tetrahedral intermediate(s) formed during glutamine hydrolysis. Inhibited by the product CTP, via allosteric rather than competitive inhibition. In terms of biological role, catalyzes the ATP-dependent amination of UTP to CTP with either L-glutamine or ammonia as the source of nitrogen. Regulates intracellular CTP levels through interactions with the four ribonucleotide triphosphates. This chain is CTP synthase, found in Chromobacterium violaceum (strain ATCC 12472 / DSM 30191 / JCM 1249 / CCUG 213 / NBRC 12614 / NCIMB 9131 / NCTC 9757 / MK).